The sequence spans 360 residues: Phospho-N-acetylmuramoyl-pentapeptide-transferase (360 aa).

10 helical membrane passes run 27 to 47 (GAVMTAMLVAFVFGPGIIEWL), 73 to 93 (TMGGIMILLGVGVATLLWADL), 98 to 118 (VWAVLLLTLGYGAIGFADDYL), 134 to 154 (LVAQVGMAVIAGLWIMLLGQG), 168 to 188 (LTFNLGWFYLPFAAFVMVGAS), 199 to 219 (GLAIVPVMIAAGVFMLIAYLV), 239 to 259 (LAVFCGAIVGAAVGFLWFNAP), 263 to 283 (VFMGDTGSLALGGALGAVSVV), 288 to 308 (IVLAIVGGLFVLETVSVIVQV), and 337 to 357 (TVVIRFWIIAMILAIVGLSTL).

The protein belongs to the glycosyltransferase 4 family. MraY subfamily. Mg(2+) serves as cofactor.

The protein localises to the cell inner membrane. It catalyses the reaction UDP-N-acetyl-alpha-D-muramoyl-L-alanyl-gamma-D-glutamyl-meso-2,6-diaminopimeloyl-D-alanyl-D-alanine + di-trans,octa-cis-undecaprenyl phosphate = di-trans,octa-cis-undecaprenyl diphospho-N-acetyl-alpha-D-muramoyl-L-alanyl-D-glutamyl-meso-2,6-diaminopimeloyl-D-alanyl-D-alanine + UMP. The protein operates within cell wall biogenesis; peptidoglycan biosynthesis. In terms of biological role, catalyzes the initial step of the lipid cycle reactions in the biosynthesis of the cell wall peptidoglycan: transfers peptidoglycan precursor phospho-MurNAc-pentapeptide from UDP-MurNAc-pentapeptide onto the lipid carrier undecaprenyl phosphate, yielding undecaprenyl-pyrophosphoryl-MurNAc-pentapeptide, known as lipid I. The sequence is that of Phospho-N-acetylmuramoyl-pentapeptide-transferase from Rhodospirillum rubrum (strain ATCC 11170 / ATH 1.1.1 / DSM 467 / LMG 4362 / NCIMB 8255 / S1).